We begin with the raw amino-acid sequence, 174 residues long: Transcriptional repressor NrdR (174 aa).

Residues 3–34 fold into a zinc finger; that stretch reads CPICHFPETDVIDTRKLYEGEVIRRRRKCRAC. The 91-residue stretch at 49–139 folds into the ATP-cone domain; sequence LMVVKKDGTR…VYRSFADIGK (91 aa). The interval 151 to 174 is disordered; sequence EGTRNGHSSAATTDQGTTDNHSRM. Positions 155–174 are enriched in polar residues; sequence NGHSSAATTDQGTTDNHSRM.

This sequence belongs to the NrdR family. Zn(2+) is required as a cofactor.

Its function is as follows. Negatively regulates transcription of bacterial ribonucleotide reductase nrd genes and operons by binding to NrdR-boxes. In Chloroflexus aggregans (strain MD-66 / DSM 9485), this protein is Transcriptional repressor NrdR.